The sequence spans 579 residues: 2-isopropylmalate synthase (579 aa).

The Pyruvate carboxyltransferase domain maps to 40–314 (PRWCAVDLRD…DPMIDFSDID (275 aa)). Mg(2+) is bound by residues aspartate 49, histidine 253, histidine 255, and asparagine 289. The regulatory domain stretch occupies residues 456-579 (SSKEDGQWGR…VNRAIRDAQA (124 aa)).

It belongs to the alpha-IPM synthase/homocitrate synthase family. LeuA type 2 subfamily. Homodimer. The cofactor is Mg(2+).

It is found in the cytoplasm. It carries out the reaction 3-methyl-2-oxobutanoate + acetyl-CoA + H2O = (2S)-2-isopropylmalate + CoA + H(+). The protein operates within amino-acid biosynthesis; L-leucine biosynthesis; L-leucine from 3-methyl-2-oxobutanoate: step 1/4. In terms of biological role, catalyzes the condensation of the acetyl group of acetyl-CoA with 3-methyl-2-oxobutanoate (2-ketoisovalerate) to form 3-carboxy-3-hydroxy-4-methylpentanoate (2-isopropylmalate). This chain is 2-isopropylmalate synthase, found in Arthrobacter sp. (strain FB24).